The primary structure comprises 484 residues: tRNA nucleotidyltransferase cca2 (484 aa).

The B/A element motif lies at 122–124 (RAE). The tract at residues 125-142 (SYDDKSRIPSVTPGTVET) is flexible loop. The short motif at 234–244 (ERVGEEIEKML) is the ERhxxExxxhh motif element.

The protein belongs to the tRNA nucleotidyltransferase/poly(A) polymerase family.

It localises to the cytoplasm. The catalysed reaction is a tRNA with a 3' CC end + ATP = a tRNA with a 3' CCA end + diphosphate. TRNA nucleotidyltransferase involved in the synthesis of the tRNA CCA terminus. In contrast to what is usually observed in eukaryotes for which one enzyme synthesizes the whole tRNA CCA terminus, in S.pombe, cca1 specifically adds two cytidine residues to a tRNA substrate lacking this sequence while cca2 specifically adds the terminal adenosine residue thereby completing the CCA sequence. The sequence is that of tRNA nucleotidyltransferase cca2 from Schizosaccharomyces pombe (strain 972 / ATCC 24843) (Fission yeast).